The primary structure comprises 321 residues: MLHLRYEYLLAIVKAIVTLLSVVTIGAYMSFFERRLLGLFQHRYGPNRVGWGGSLQLLADTIKILFKEDWIPPFADRIIFTLAPIIAFTSLLLVFAIMPISPNWVVIELNIGILFFLMMAGISVYAILLGGWSSNNKYSLLGAMRAAAQTLSYEVFLGLSIMGVVAQAGSFNISTIVADQTHIWNIVPQFFGFITFYLAGLAICHRHPFDQPESEQELADGYHIEYSGMKFGLFFIGEYISLVTISALTITLFFGGWQGPWLPPYIWFIIKTTVFIIIFILIRAALPRPRYDQVMILGWTICLPLTLMNLLVTAIVILYNT.

The next 8 membrane-spanning stretches (helical) occupy residues 9–29 (LLAI…GAYM), 78–98 (IIFT…FAIM), 111–131 (IGIL…LLGG), 156–176 (FLGL…ISTI), 183–203 (IWNI…GLAI), 234–254 (FFIG…TLFF), 262–282 (LPPY…FILI), and 296–316 (ILGW…TAIV).

The protein belongs to the complex I subunit 1 family. As to quaternary structure, NDH-1 is composed of 14 different subunits. Subunits NuoA, H, J, K, L, M, N constitute the membrane sector of the complex.

It localises to the cell membrane. The enzyme catalyses a quinone + NADH + 5 H(+)(in) = a quinol + NAD(+) + 4 H(+)(out). Its function is as follows. NDH-1 shuttles electrons from NADH, via FMN and iron-sulfur (Fe-S) centers, to quinones in the respiratory chain. The immediate electron acceptor for the enzyme in this species is believed to be ubiquinone. Couples the redox reaction to proton translocation (for every two electrons transferred, four hydrogen ions are translocated across the cytoplasmic membrane), and thus conserves the redox energy in a proton gradient. This subunit may bind ubiquinone. This chain is NADH-quinone oxidoreductase subunit H, found in Baumannia cicadellinicola subsp. Homalodisca coagulata.